The sequence spans 171 residues: 3-hydroxyanthranilate 3,4-dioxygenase (171 aa).

Arg45 provides a ligand contact to O2. Fe cation-binding residues include His49, Glu55, and His93. Position 55 (Glu55) interacts with substrate. Positions 97 and 107 each coordinate substrate. Residues Cys122, Cys125, Cys159, and Cys162 each coordinate a divalent metal cation.

Belongs to the 3-HAO family. Fe(2+) serves as cofactor.

Its subcellular location is the cytoplasm. The enzyme catalyses 3-hydroxyanthranilate + O2 = (2Z,4Z)-2-amino-3-carboxymuconate 6-semialdehyde. The protein operates within cofactor biosynthesis; NAD(+) biosynthesis; quinolinate from L-kynurenine: step 3/3. Its function is as follows. Catalyzes the oxidative ring opening of 3-hydroxyanthranilate to 2-amino-3-carboxymuconate semialdehyde, which spontaneously cyclizes to quinolinate. The sequence is that of 3-hydroxyanthranilate 3,4-dioxygenase from Candida albicans (strain SC5314 / ATCC MYA-2876) (Yeast).